Here is a 426-residue protein sequence, read N- to C-terminus: Glutamyl-tRNA(Gln) amidotransferase subunit D (426 aa).

Residues 82–413 (KNISILSTGG…KDAKKLICKN (332 aa)) form the Asparaginase/glutaminase domain. Active-site residues include threonine 92, threonine 168, aspartate 169, and lysine 245.

The protein belongs to the asparaginase 1 family. GatD subfamily. As to quaternary structure, heterodimer of GatD and GatE.

It carries out the reaction L-glutamyl-tRNA(Gln) + L-glutamine + ATP + H2O = L-glutaminyl-tRNA(Gln) + L-glutamate + ADP + phosphate + H(+). Its function is as follows. Allows the formation of correctly charged Gln-tRNA(Gln) through the transamidation of misacylated Glu-tRNA(Gln) in organisms which lack glutaminyl-tRNA synthetase. The reaction takes place in the presence of glutamine and ATP through an activated gamma-phospho-Glu-tRNA(Gln). The GatDE system is specific for glutamate and does not act on aspartate. In Methanococcus vannielii (strain ATCC 35089 / DSM 1224 / JCM 13029 / OCM 148 / SB), this protein is Glutamyl-tRNA(Gln) amidotransferase subunit D.